We begin with the raw amino-acid sequence, 313 residues long: Ribosomal RNA small subunit methyltransferase H (313 aa).

S-adenosyl-L-methionine is bound by residues 35 to 37 (GGH), D55, F79, D101, and Q108.

The protein belongs to the methyltransferase superfamily. RsmH family.

The protein localises to the cytoplasm. The catalysed reaction is cytidine(1402) in 16S rRNA + S-adenosyl-L-methionine = N(4)-methylcytidine(1402) in 16S rRNA + S-adenosyl-L-homocysteine + H(+). In terms of biological role, specifically methylates the N4 position of cytidine in position 1402 (C1402) of 16S rRNA. The chain is Ribosomal RNA small subunit methyltransferase H from Enterobacter sp. (strain 638).